Reading from the N-terminus, the 113-residue chain is Class I hydrophobin POH3 (113 aa).

Positions 1 to 21 are cleaved as a signal peptide; the sequence is MFSRVIFCTFLILPLLAAATA. Intrachain disulfides connect C32–C92, C39–C86, C40–C73, and C93–C106. Residue N110 is glycosylated (N-linked (GlcNAc...) asparagine).

The protein belongs to the fungal hydrophobin family. In terms of assembly, self-assembles to form functional amyloid fibrils called rodlets. Self-assembly into fibrillar rodlets occurs spontaneously at hydrophobic:hydrophilic interfaces and the rodlets further associate laterally to form amphipathic monolayers. As to expression, expressionn is switched off in the fruiting bodies but abundantly expressed in the vegetative mycelium of both monokaryon and dikaryon.

Its subcellular location is the secreted. The protein localises to the cell wall. In terms of biological role, aerial growth, conidiation, and dispersal of filamentous fungi in the environment rely upon a capability of their secreting small amphipathic proteins called hydrophobins (HPBs) with low sequence identity. Class I can self-assemble into an outermost layer of rodlet bundles on aerial cell surfaces, conferring cellular hydrophobicity that supports fungal growth, development and dispersal; whereas Class II form highly ordered films at water-air interfaces through intermolecular interactions but contribute nothing to the rodlet structure. POH3 is a class I hydrophobin that causes a large drop in the water-surface tension, enabling hyphae to breach the interface and grow into the air, in both the primary and the secondary mycelium. In the latter mycelium POH3 maight also play a role in the emergence of fruiting bodies. Secreted POH3 could also play a role in facilitating lignin degradation. This chain is Class I hydrophobin POH3, found in Pleurotus ostreatus (Oyster mushroom).